A 142-amino-acid chain; its full sequence is Large-conductance mechanosensitive channel (142 aa).

3 helical membrane-spanning segments follow: residues 19-39, 41-61, and 78-98; these read VGII…ADLV, PFIA…ALDG, and FAFG…FVVF.

It belongs to the MscL family. As to quaternary structure, homopentamer.

It is found in the cell inner membrane. Channel that opens in response to stretch forces in the membrane lipid bilayer. May participate in the regulation of osmotic pressure changes within the cell. The sequence is that of Large-conductance mechanosensitive channel from Roseobacter denitrificans (strain ATCC 33942 / OCh 114) (Erythrobacter sp. (strain OCh 114)).